A 631-amino-acid chain; its full sequence is Quinoprotein alcohol dehydrogenase PedE (631 aa).

Residues 1–33 (MTIRSLPALSPLALSVRVLLMAGSLALGNVATA) form the signal peptide. Ca(2+)-binding residues include D53, T56, and D59. Pyrroloquinoline quinone is bound at residue E103. C147 and C148 are oxidised to a cystine. Residues R153, T197, and 215–217 (HGS) each bind pyrroloquinoline quinone. E221 is a Ca(2+) binding site. Residues 250 to 286 (GRLNGKDSTPTGDVKAPSWPDDPTTETGKVEAWSHGG) form a disordered region. Ca(2+)-binding residues include N308 and D358. D358 acts as the Proton acceptor in catalysis. R386 contacts pyrroloquinoline quinone. A disordered region spans residues 421 to 443 (GRPVENPGQRPAKPLPGETKGKP). 2 residues coordinate pyrroloquinoline quinone: W531 and A595.

This sequence belongs to the bacterial PQQ dehydrogenase family. In terms of assembly, homodimer. Interacts with cytochrome c550. It depends on pyrroloquinoline quinone as a cofactor. Ca(2+) serves as cofactor. Post-translationally, the disulfide ring formed between the two adjacent cysteine residues Cys-147 and Cys-148 is essential for efficient electron transfer at pH 7 from PedE to its natural electron acceptor cytochrome c550.

The protein resides in the periplasm. It catalyses the reaction a primary alcohol + 2 Fe(III)-[cytochrome c] = an aldehyde + 2 Fe(II)-[cytochrome c] + 2 H(+). The catalysed reaction is ethanol + 2 Fe(III)-[cytochrome c] = acetaldehyde + 2 Fe(II)-[cytochrome c] + 2 H(+). It carries out the reaction butan-1-ol + 2 Fe(III)-[cytochrome c] = butanal + 2 Fe(II)-[cytochrome c] + 2 H(+). The enzyme catalyses butan-2-ol + 2 Fe(III)-[cytochrome c] = butan-2-one + 2 Fe(II)-[cytochrome c] + 2 H(+). It catalyses the reaction 2-phenylethanol + 2 Fe(III)-[cytochrome c] = 2-phenylacetaldehyde + 2 Fe(II)-[cytochrome c] + 2 H(+). The catalysed reaction is octan-1-ol + 2 Fe(III)-[cytochrome c] = octanal + 2 Fe(II)-[cytochrome c] + 2 H(+). It carries out the reaction hexan-1-ol + 2 Fe(III)-[cytochrome c] = hexanal + 2 Fe(II)-[cytochrome c] + 2 H(+). The enzyme catalyses cinnamyl alcohol + 2 Fe(III)-[cytochrome c] = cinnamaldehyde + 2 Fe(II)-[cytochrome c] + 2 H(+). It catalyses the reaction farnesol + 2 Fe(III)-[cytochrome c] = farnesal + 2 Fe(II)-[cytochrome c] + 2 H(+). The catalysed reaction is an aldehyde + 2 Fe(III)-[cytochrome c] + H2O = a carboxylate + 2 Fe(II)-[cytochrome c] + 3 H(+). It carries out the reaction acetaldehyde + 2 Fe(III)-[cytochrome c] + H2O = 2 Fe(II)-[cytochrome c] + acetate + 3 H(+). The enzyme catalyses butanal + 2 Fe(III)-[cytochrome c] + H2O = butanoate + 2 Fe(II)-[cytochrome c] + 3 H(+). It catalyses the reaction hexanal + 2 Fe(III)-[cytochrome c] + H2O = hexanoate + 2 Fe(II)-[cytochrome c] + 3 H(+). The catalysed reaction is octanal + 2 Fe(III)-[cytochrome c] + H2O = octanoate + 2 Fe(II)-[cytochrome c] + 3 H(+). Functionally, alcohol dehydrogenase that catalyzes the oxidation of a range of substrates, including linear and aromatic primary and secondary alcohols, as well as aldehydes, allowing bacterial growth with a variety of volatile organic compounds (VOCs) as carbon and energy sources. Uses a specific inducible cytochrome c550, encoded by the adjacent gene in the locus, as electron acceptor. In Pseudomonas putida (strain ATCC 47054 / DSM 6125 / CFBP 8728 / NCIMB 11950 / KT2440), this protein is Quinoprotein alcohol dehydrogenase PedE.